The following is a 309-amino-acid chain: Palmitoyltransferase ZDHHC19 (309 aa).

A run of 2 helical transmembrane segments spans residues 29–49 and 59–79; these read LFAA…FAFP and WAFP…LVSL. Residues 112–162 enclose the DHHC domain; that stretch reads QWCPKCCFHRPPRTYHCPWCNICVEDFDHHCKWVNNCIGHRNFRFFMLLVL. The active-site S-palmitoyl cysteine intermediate is C142. Transmembrane regions (helical) follow at residues 160–180 and 193–213; these read LVLS…IFLV and IAIV…LLLL. Over residues 280-294 the composition is skewed to pro residues; it reads LHPPMSPSALNPPAP. The interval 280–309 is disordered; it reads LHPPMSPSALNPPAPTSGSLQSREGTPGAW.

This sequence belongs to the DHHC palmitoyltransferase family.

Its subcellular location is the golgi apparatus membrane. The protein localises to the cytoplasm. It localises to the perinuclear region. The enzyme catalyses L-cysteinyl-[protein] + hexadecanoyl-CoA = S-hexadecanoyl-L-cysteinyl-[protein] + CoA. Its function is as follows. Palmitoyltransferase that mediates palmitoylation oproteins, such as RRAS and SQSTM1. Catalyzes palmitoylation of RRAS, leading to increased cell viability. Acts as a positive regulator of autophagy by mediating palmitoylation of SQSTM1, promoting affinity between SQSTM1 and ATG8 proteins and recruitment of ubiquitinated cargo proteins to autophagosomes. In terms of biological role, (Microbial infection) Promotes Chikungunya virus (CHIKV) replication by mediating viral nsp1 palmitoylation. The sequence is that of Palmitoyltransferase ZDHHC19 from Homo sapiens (Human).